Reading from the N-terminus, the 495-residue chain is Lysine--tRNA ligase (495 aa).

Positions 406 and 413 each coordinate Mg(2+).

The protein belongs to the class-II aminoacyl-tRNA synthetase family. In terms of assembly, homodimer. It depends on Mg(2+) as a cofactor.

Its subcellular location is the cytoplasm. It catalyses the reaction tRNA(Lys) + L-lysine + ATP = L-lysyl-tRNA(Lys) + AMP + diphosphate. This Staphylococcus saprophyticus subsp. saprophyticus (strain ATCC 15305 / DSM 20229 / NCIMB 8711 / NCTC 7292 / S-41) protein is Lysine--tRNA ligase.